Consider the following 152-residue polypeptide: Nucleoside diphosphate kinase B (152 aa).

The interaction with AKAP13 stretch occupies residues 1–66 (MANLERTFIA…DRPFFPGLVK (66 aa)). ATP contacts are provided by K12, F60, R88, T94, R105, and N115. H118 acts as the Pros-phosphohistidine intermediate in catalysis.

This sequence belongs to the NDK family. As to quaternary structure, hexamer of two different chains: An and B (A6, A5B, A4B2, A3B3, A2B4, AB5, B6). Interacts with CAPN8. Interacts with AKAP13. Interacts with ITGB1BP1 (via C-terminal domain region). Interacts with BCL2L10. Requires Mg(2+) as cofactor. In terms of processing, the N-terminus is blocked.

The protein localises to the cytoplasm. The protein resides in the cell projection. It is found in the lamellipodium. Its subcellular location is the ruffle. It localises to the nucleus. It carries out the reaction a 2'-deoxyribonucleoside 5'-diphosphate + ATP = a 2'-deoxyribonucleoside 5'-triphosphate + ADP. It catalyses the reaction a ribonucleoside 5'-diphosphate + ATP = a ribonucleoside 5'-triphosphate + ADP. The catalysed reaction is ATP + protein L-histidine = ADP + protein N-phospho-L-histidine.. Major role in the synthesis of nucleoside triphosphates other than ATP. The ATP gamma phosphate is transferred to the NDP beta phosphate via a ping-pong mechanism, using a phosphorylated active-site intermediate. Negatively regulates Rho activity by interacting with AKAP13/LBC. Acts as a transcriptional activator of the MYC gene; binds DNA non-specifically. Binds to both single-stranded guanine- and cytosine-rich strands within the nuclease hypersensitive element (NHE) III(1) region of the MYC gene promoter. Does not bind to duplex NHE III(1). Has G-quadruplex (G4) DNA-binding activity, which is independent of its nucleotide-binding and kinase activity. Binds both folded and unfolded G4 with similar low nanomolar affinities. Stabilizes folded G4s regardless of whether they are prefolded or not. Exhibits histidine protein kinase activity. The protein is Nucleoside diphosphate kinase B (Nme2) of Rattus norvegicus (Rat).